The following is a 614-amino-acid chain: Putative amino acid transporter AAT1 (614 aa).

11 helical membrane passes run Val184–Leu216, Tyr222–Leu243, Leu255–Val275, Arg295–Phe311, Ile318–Ser340, His360–Phe380, Ile401–Leu417, Ser437–Ala459, Cys531–Val547, Phe553–Tyr575, and Arg587–Ile613.

It belongs to the amino acid/polyamine transporter 2 family.

Its subcellular location is the vacuole membrane. Putative amino acid transporter. Involved in maintaining the osmotic homeostasis of the digestive vacuole. Important for the timely development and growth of the asexual-stage parasites and male gametocyte maturation. The chain is Putative amino acid transporter AAT1 from Plasmodium berghei (strain Anka).